Here is a 123-residue protein sequence, read N- to C-terminus: Translation initiation factor 1A (123 aa).

The segment covering 1 to 11 (MSPDKTEDEDK) has biased composition (acidic residues). The interval 1–26 (MSPDKTEDEDKDVNVDQDQFNEEEES) is disordered. The 75-residue stretch at 28-102 (GRVILPNKKK…EKADVVYRYT (75 aa)) folds into the S1-like domain.

The protein belongs to the eIF-1A family.

Functionally, seems to be required for maximal rate of protein biosynthesis. Enhances ribosome dissociation into subunits and stabilizes the binding of the initiator Met-tRNA(I) to 40 S ribosomal subunits. The chain is Translation initiation factor 1A (eIF1A) from Thermoplasma volcanium (strain ATCC 51530 / DSM 4299 / JCM 9571 / NBRC 15438 / GSS1).